Here is a 690-residue protein sequence, read N- to C-terminus: MSCFSHVMNPITGQNSWQERGDDYDYHLEVANAGFGDMLHDWERNQKYFAALRKTIAGMREAGREVHVLDIGTGTGILSMMALAAGADSVTACEAFLPMANCAEKILAANGAGDKVRLIRKRSTEIQVGEDMPRKANLLVAELLDTELIGEGAIGIYNHAHAELLTEDALCIPARARCYAQVAQSPLAAQWNSLKTIANLDGEPLLHPPEQLKSCQGEAALHDVQLSQLPSSAFRPLTDPVEIFQFDFQRKQEREKQRSQLLKLQSKQPGAAELVFYWWDIQLDDDGEILLSCAPYWAHPQLKELAAEKAKDHPLPNVVPWRDHWMQAIYYIPKPLQLLEAGKSFHLSCHHDEYSLWFDAREEAPTKSVRRHTCTCDLHMTYSRSRIGQLNQSPRNKRYLRYLEESIEAEKSNVLVLGNGCLLGLASSALGAASVLLHEPHRFSRRLIESIVKHNQLKNVQFLDKVEELEDSRLAALTHIFAEPYFLNAILPWDNFYFGTLLTKIKDRLPEGVKISPCSARIYALPVEFLDLHKIRAPVGSCEGFDLRLFDEMVERSAEQAVSLVEAQPLWEYPCRALSEPQEVLSVDFSNFGQEHSLKGSIELKHPRICNGVALWVDWQLVEDNSPRSIVSSGPSEPVVPGEFVKWDMFVRQGVHFPRRPKEAITHLEWSTVFKPLLGELTFSFGQKKL.

2 SAM-dependent MTase PRMT-type domains span residues 14-357 (QNSW…YSLW) and 366-690 (TKSV…QKKL).

It belongs to the class I-like SAM-binding methyltransferase superfamily. Protein arginine N-methyltransferase family. PRMT7 subfamily. Expressed at low level in ovary.

In terms of biological role, essential arginine methyltransferase that can both catalyze the formation of omega-N monomethylarginine (MMA) and symmetrical dimethylarginine (sDMA). Specifically mediates the symmetrical dimethylation of arginine residues in the small nuclear ribonucleoproteins SmD1 and SmD3. The protein is Protein arginine N-methyltransferase 7 (Art7) of Drosophila melanogaster (Fruit fly).